The chain runs to 641 residues: Chaperone protein DnaK (641 aa).

Position 198 is a phosphothreonine; by autocatalysis (T198). 3 stretches are compositionally biased toward basic and acidic residues: residues 514-529 (AEAN…EGVE), 540-554 (SSEK…KVSE), and 608-621 (AHAD…RSGD). Disordered stretches follow at residues 514 to 554 (AEAN…KVSE) and 604 to 641 (QTES…KRSA). Over residues 622–633 (DVVDADYEEVKD) the composition is skewed to acidic residues.

Belongs to the heat shock protein 70 family.

Functionally, acts as a chaperone. In Sinorhizobium medicae (strain WSM419) (Ensifer medicae), this protein is Chaperone protein DnaK.